A 779-amino-acid chain; its full sequence is MSKEQSCVLKAWEVTVRKTQQAKKRANSIFGTVSVAPQTDDDATTTTEENDDETSTNRSSIGELYHAERILPNGDYYTGQWYDSFPHGHGKYLWTDGCMYIGDWYNGKTMGRGKFGWPSGATYEGEFKSGYMDGVGLYTGPSGDTYKGQWVMNLKHGHGIKRFANGDVYDGEWRRGLQEAQGKYQWRDGSYYMGEWKNATICGKGTFIWTDGNRYDGFWDDGFPRGNGTFKWADGSFYVGHWSNDPEEMNGTYYPSGDDGSPEWDPKDVFTNLSEYKICSGERVPVLPSQKKLSVWNSSKRVEKPRRMSVDGRVSVGVDRAFEKMNMWGTESGEGAADIDSTTRRDLDAEMMRLEAEGFIQSLRPSPAPMRLPRAGRKQGETISKGHRNYELMLNLQLGIRHAVGKQAPVVSLDLKHSAFDPKEKVWTRFPPEGTKYTPPHQSSEFKWKDYCPLVFRSLRKLFKVDPADYMLSICGNDALRELSSPGKSGSFFYLTNDDRYMIKTMKKSETKVLLRMLAAYYNHVRAFENTLVIRFYGLHCVKLTGPIQKKVRFVIMGNLFCSEYSIHRRFDLKGSSLGRTTDKPESEINSNTILKDLDLNFIFRLQKAWYQEFIRQVDKDCEFLEQERIMDYSLLVGIHFREASVAGELIPSGARTPIGEFEDESAPRLSRADVDQLLSDPTRWASIRLGGNMPARAERTMRRSDCEFQLVGEPTGEYYEVVMIFGIIDILQDYDISKKLEHAYKSIQYDPTSISAVDPRLYSRRFRDFIFKVFTEDN.

Residues 20–61 (QQAKKRANSIFGTVSVAPQTDDDATTTTEENDDETSTNRSSI) form a disordered region. The span at 39–54 (TDDDATTTTEENDDET) shows a compositional bias: acidic residues. MORN repeat units follow at residues 77-99 (YTGQ…DGCM), 100-122 (YIGD…SGAT), 123-145 (YEGE…SGDT), 146-168 (YKGQ…NGDV), 169-191 (YDGE…DGSY), 192-214 (YMGE…DGNR), 215-237 (YDGF…DGSF), and 238-259 (YVGH…SGDD). The PIPK domain occupies 382 to 775 (TISKGHRNYE…RFRDFIFKVF (394 aa)). Residues 735-756 (YDISKKLEHAYKSIQYDPTSIS) form an activation loop region.

The catalysed reaction is a 1,2-diacyl-sn-glycero-3-phospho-(1D-myo-inositol 4-phosphate) + ATP = a 1,2-diacyl-sn-glycero-3-phospho-(1D-myo-inositol-4,5-bisphosphate) + ADP + H(+). The chain is Phosphatidylinositol 4-phosphate 5-kinase 4 (PIP5K4) from Arabidopsis thaliana (Mouse-ear cress).